A 286-amino-acid polypeptide reads, in one-letter code: 2-dehydro-3-deoxyphosphooctonate aldolase (286 aa).

The protein belongs to the KdsA family.

It localises to the cytoplasm. The catalysed reaction is D-arabinose 5-phosphate + phosphoenolpyruvate + H2O = 3-deoxy-alpha-D-manno-2-octulosonate-8-phosphate + phosphate. Its pathway is carbohydrate biosynthesis; 3-deoxy-D-manno-octulosonate biosynthesis; 3-deoxy-D-manno-octulosonate from D-ribulose 5-phosphate: step 2/3. The protein operates within bacterial outer membrane biogenesis; lipopolysaccharide biosynthesis. The polypeptide is 2-dehydro-3-deoxyphosphooctonate aldolase (Bradyrhizobium sp. (strain BTAi1 / ATCC BAA-1182)).